The chain runs to 403 residues: Synaptotagmin-7 (403 aa).

Topologically, residues 1-16 are vesicular; it reads MYRDPEAASPGAPSRD. The helical transmembrane segment at 17–37 threads the bilayer; sequence VLLVSAIITVSLSVTVVLCGL. Residues 38–403 lie on the Cytoplasmic side of the membrane; it reads CHWCQRKLGK…PVAQWHQLKA (366 aa). Residue serine 52 is modified to Phosphoserine. The interval 53–106 is disordered; the sequence is LETVGTPDSGRGRSEKKAIKLPAGGKAVNTAPVPGQTPHDESDRRTEPRSSVSD. A Phosphothreonine modification is found at threonine 58. Residue serine 61 is modified to Phosphoserine. Residues 90-100 are compositionally biased toward basic and acidic residues; it reads PHDESDRRTEP. A phosphoserine mark is found at serine 119 and serine 122. 2 consecutive C2 domains span residues 135-255 and 266-399; these read NLGR…TFWK and SRGE…AQWH. Residues aspartate 166, aspartate 172, aspartate 225, aspartate 227, serine 230, aspartate 233, aspartate 297, aspartate 303, aspartate 357, aspartate 359, serine 362, and aspartate 365 each contribute to the Ca(2+) site.

This sequence belongs to the synaptotagmin family. As to quaternary structure, homodimer. Can also form heterodimers with SYT6, SYT9 and SYT10. Interacts with calmodulin (CALM1, CALM2 or CALM3). Interacts with CD63; required for localization to lysosomes. Interacts with APP. Requires Ca(2+) as cofactor. Palmitoylated at its vesicular N-terminus; palmitoylation is required for localization to lysosome and phagocytosis in macrophages. Expressed in a variety of adult and fetal tissues.

It localises to the cell membrane. The protein localises to the presynaptic cell membrane. Its subcellular location is the cytoplasmic vesicle. It is found in the secretory vesicle. The protein resides in the synaptic vesicle membrane. It localises to the lysosome membrane. The protein localises to the phagosome membrane. Its subcellular location is the peroxisome membrane. It is found in the secretory vesicle membrane. In terms of biological role, ca(2+) sensor involved in Ca(2+)-dependent exocytosis of secretory and synaptic vesicles through Ca(2+) and phospholipid binding to the C2 domain. Ca(2+) induces binding of the C2-domains to phospholipid membranes and to assembled SNARE-complexes; both actions contribute to triggering exocytosis. SYT7 binds Ca(2+) with high affinity and slow kinetics compared to other synaptotagmins. Involved in Ca(2+)-triggered lysosomal exocytosis, a major component of the plasma membrane repair. Ca(2+)-regulated delivery of lysosomal membranes to the cell surface is also involved in the phagocytic uptake of particles by macrophages. Ca(2+)-triggered lysosomal exocytosis also plays a role in bone remodeling by regulating secretory pathways in osteoclasts and osteoblasts. In case of infection, involved in participates cell invasion by Trypanosoma cruzi via Ca(2+)-triggered lysosomal exocytosis. Involved in cholesterol transport from lysosome to peroxisome by promoting membrane contacts between lysosomes and peroxisomes: probably acts by promoting vesicle fusion by binding phosphatidylinositol-4,5-bisphosphate on peroxisomal membranes. Acts as a key mediator of synaptic facilitation, a process also named short-term synaptic potentiation: synaptic facilitation takes place at synapses with a low initial release probability and is caused by influx of Ca(2+) into the axon terminal after spike generation, increasing the release probability of neurotransmitters. Probably mediates synaptic facilitation by directly increasing the probability of release. May also contribute to synaptic facilitation by regulating synaptic vesicle replenishment, a process required to ensure that synaptic vesicles are ready for the arrival of the next action potential: SYT7 is required for synaptic vesicle replenishment by acting as a sensor for Ca(2+) and by forming a complex with calmodulin. Also acts as a regulator of Ca(2+)-dependent insulin and glucagon secretion in beta-cells. Triggers exocytosis by promoting fusion pore opening and fusion pore expansion in chromaffin cells. Also regulates the secretion of some non-synaptic secretory granules of specialized cells. The sequence is that of Synaptotagmin-7 from Homo sapiens (Human).